The following is a 588-amino-acid chain: Oxidoreductase NdmD (588 aa).

Residues 9 to 114 (WFPIATTEDL…VREKHGFIWT (106 aa)) enclose the Rieske domain. [2Fe-2S] cluster-binding residues include Cys-50, His-52, Cys-69, and His-72. One can recognise an FAD-binding FR-type domain in the interval 272–373 (PTHYICEVVT…TLPRNGFPLV (102 aa)). The 86-residue stretch at 503–588 (YEVELKKTGQ…CKSKKIVLDL (86 aa)) folds into the 2Fe-2S ferredoxin-type domain. Positions 537, 542, 545, and 575 each coordinate [2Fe-2S] cluster.

Requires [2Fe-2S] cluster as cofactor.

Its function is as follows. Involved in the caffeine degradation, which is the essential first step for assimilating the carbon and nitrogen in caffeine. Catalyzes the oxidation of NADH and transfers electrons to NdmA and NdmB, which catalyze the N-demethylation reactions. The polypeptide is Oxidoreductase NdmD (ndmD) (Pseudomonas putida (Arthrobacter siderocapsulatus)).